We begin with the raw amino-acid sequence, 68 residues long: Large ribosomal subunit protein uL29 (68 aa).

It belongs to the universal ribosomal protein uL29 family.

The sequence is that of Large ribosomal subunit protein uL29 from Chloroflexus aggregans (strain MD-66 / DSM 9485).